The sequence spans 106 residues: UPF0145 protein PP_2873 (106 aa).

This sequence belongs to the UPF0145 family.

This is UPF0145 protein PP_2873 from Pseudomonas putida (strain ATCC 47054 / DSM 6125 / CFBP 8728 / NCIMB 11950 / KT2440).